The primary structure comprises 139 residues: D-ribose pyranase (139 aa).

H20 serves as the catalytic Proton donor. Residues D28, H106, and 128–130 contribute to the substrate site; that span reads YAN.

Belongs to the RbsD / FucU family. RbsD subfamily. As to quaternary structure, homodecamer.

It is found in the cytoplasm. The enzyme catalyses beta-D-ribopyranose = beta-D-ribofuranose. The protein operates within carbohydrate metabolism; D-ribose degradation; D-ribose 5-phosphate from beta-D-ribopyranose: step 1/2. In terms of biological role, catalyzes the interconversion of beta-pyran and beta-furan forms of D-ribose. This chain is D-ribose pyranase, found in Photorhabdus laumondii subsp. laumondii (strain DSM 15139 / CIP 105565 / TT01) (Photorhabdus luminescens subsp. laumondii).